The following is a 320-amino-acid chain: tRNA U34 carboxymethyltransferase (320 aa).

Carboxy-S-adenosyl-L-methionine is bound by residues K89, W103, K108, G128, 150-152 (DPT), 179-180 (IE), M194, Y198, and R313.

The protein belongs to the class I-like SAM-binding methyltransferase superfamily. CmoB family. In terms of assembly, homotetramer.

The enzyme catalyses carboxy-S-adenosyl-L-methionine + 5-hydroxyuridine(34) in tRNA = 5-carboxymethoxyuridine(34) in tRNA + S-adenosyl-L-homocysteine + H(+). Functionally, catalyzes carboxymethyl transfer from carboxy-S-adenosyl-L-methionine (Cx-SAM) to 5-hydroxyuridine (ho5U) to form 5-carboxymethoxyuridine (cmo5U) at position 34 in tRNAs. This is tRNA U34 carboxymethyltransferase from Glaesserella parasuis serovar 5 (strain SH0165) (Haemophilus parasuis).